The primary structure comprises 393 residues: Aspartate aminotransferase (393 aa).

Gly-38, Trp-124, and Asn-174 together coordinate L-aspartate. Lys-237 carries the N6-(pyridoxal phosphate)lysine modification.

Belongs to the class-I pyridoxal-phosphate-dependent aminotransferase family. Homodimer. The cofactor is pyridoxal 5'-phosphate.

It localises to the cytoplasm. It catalyses the reaction L-aspartate + 2-oxoglutarate = oxaloacetate + L-glutamate. The polypeptide is Aspartate aminotransferase (aspB) (Bacillus subtilis (strain 168)).